We begin with the raw amino-acid sequence, 119 residues long: Large ribosomal subunit protein bL20 (119 aa).

The protein belongs to the bacterial ribosomal protein bL20 family.

In terms of biological role, binds directly to 23S ribosomal RNA and is necessary for the in vitro assembly process of the 50S ribosomal subunit. It is not involved in the protein synthesizing functions of that subunit. In Afipia carboxidovorans (strain ATCC 49405 / DSM 1227 / KCTC 32145 / OM5) (Oligotropha carboxidovorans), this protein is Large ribosomal subunit protein bL20.